The chain runs to 284 residues: 4-diphosphocytidyl-2-C-methyl-D-erythritol kinase (284 aa).

Residue Lys-14 is part of the active site. 98–108 (PMGGGLGGGSS) lines the ATP pocket. Residue Asp-140 is part of the active site.

This sequence belongs to the GHMP kinase family. IspE subfamily.

It carries out the reaction 4-CDP-2-C-methyl-D-erythritol + ATP = 4-CDP-2-C-methyl-D-erythritol 2-phosphate + ADP + H(+). It participates in isoprenoid biosynthesis; isopentenyl diphosphate biosynthesis via DXP pathway; isopentenyl diphosphate from 1-deoxy-D-xylulose 5-phosphate: step 3/6. Catalyzes the phosphorylation of the position 2 hydroxy group of 4-diphosphocytidyl-2C-methyl-D-erythritol. The protein is 4-diphosphocytidyl-2-C-methyl-D-erythritol kinase of Shewanella sp. (strain MR-4).